A 128-amino-acid chain; its full sequence is Large ribosomal subunit protein bL19 (128 aa).

This sequence belongs to the bacterial ribosomal protein bL19 family.

Functionally, this protein is located at the 30S-50S ribosomal subunit interface and may play a role in the structure and function of the aminoacyl-tRNA binding site. The protein is Large ribosomal subunit protein bL19 of Janthinobacterium sp. (strain Marseille) (Minibacterium massiliensis).